The sequence spans 598 residues: Mitochondrial distribution and morphology protein 30 (598 aa).

One can recognise an F-box domain in the interval 13–59 (SFTIDHLPPEIWLCISKLVGTSDLHNLCLINRRLYLTITSDEIWKRR).

In terms of assembly, interacts with SKP1. Component of the probable SCF(MDM30) complex containing CDC53, SKP1, RBX1 and MDM30. Interacts with SKP1 and FZO1.

It localises to the cytoplasm. Its subcellular location is the mitochondrion. Its pathway is protein modification; protein ubiquitination. In terms of biological role, substrate recognition component of a SCF (SKP1-CUL1-F-box protein) E3 ubiquitin-protein ligase complex which mediates the ubiquitination and subsequent proteasomal degradation of target proteins. Probably recognizes and binds to phosphorylated target proteins. Recognizes FZO1 and regulates the amount of FZO1. Regulatory factor for the mitochondrial fusion machinery. Required for mitochondrial DNA maintenance. This is Mitochondrial distribution and morphology protein 30 (MDM30) from Saccharomyces cerevisiae (strain ATCC 204508 / S288c) (Baker's yeast).